Reading from the N-terminus, the 222-residue chain is Glutathione S-transferase alpha-1 (222 aa).

At M1 the chain carries N-acetylmethionine. The 81-residue stretch at 3 to 83 (GKPVLHYFNA…YIATKYDLYG (81 aa)) folds into the GST N-terminal domain. K4 bears the N6-succinyllysine mark. Residues Y9, K45, 54 to 55 (QV), and 67 to 68 (QT) each bind glutathione. Residues 85–208 (DMKERALIDM…QPGSQRKLPV (124 aa)) form the GST C-terminal domain.

This sequence belongs to the GST superfamily. Alpha family. In terms of assembly, homodimer. Homodimer or heterodimer of GSTA1 and GSTA2.

Its subcellular location is the cytoplasm. The enzyme catalyses RX + glutathione = an S-substituted glutathione + a halide anion + H(+). It carries out the reaction prostaglandin A2 + glutathione = prostaglandin A2-S-(R)-glutathione. It catalyses the reaction prostaglandin J2 + glutathione = prostaglandin J2-S-(R)-glutathione. The catalysed reaction is (13S)-hydroperoxy-(9Z,11E)-octadecadienoate + 2 glutathione = (13S)-hydroxy-(9Z,11E)-octadecadienoate + glutathione disulfide + H2O. The enzyme catalyses androst-5-ene-3,17-dione = androst-4-ene-3,17-dione. Its function is as follows. Glutathione S-transferase that catalyzes the nucleophilic attack of the sulfur atom of glutathione on the electrophilic groups of a wide range of exogenous and endogenous compounds. Involved in the formation of glutathione conjugates of both prostaglandin A2 (PGA2) and prostaglandin J2 (PGJ2). It also catalyzes the isomerization of D5-androstene-3,17-dione (AD) into D4-androstene-3,17-dione and may therefore play an important role in hormone biosynthesis. Through its glutathione-dependent peroxidase activity toward the fatty acid hydroperoxide (13S)-hydroperoxy-(9Z,11E)-octadecadienoate/13-HPODE it is also involved in the metabolism of oxidized linoleic acid. In Rattus norvegicus (Rat), this protein is Glutathione S-transferase alpha-1 (Gsta1).